The primary structure comprises 456 residues: UDP-N-acetylglucosamine 1-carboxyvinyltransferase (456 aa).

34–35 (KN) is a binding site for phosphoenolpyruvate. Arg-104 provides a ligand contact to UDP-N-acetyl-alpha-D-glucosamine. The active-site Proton donor is the Cys-128. Cys-128 carries the 2-(S-cysteinyl)pyruvic acid O-phosphothioketal modification. The UDP-N-acetyl-alpha-D-glucosamine site is built by Asp-319 and Ile-341.

Belongs to the EPSP synthase family. MurA subfamily.

Its subcellular location is the cytoplasm. It catalyses the reaction phosphoenolpyruvate + UDP-N-acetyl-alpha-D-glucosamine = UDP-N-acetyl-3-O-(1-carboxyvinyl)-alpha-D-glucosamine + phosphate. The protein operates within cell wall biogenesis; peptidoglycan biosynthesis. Cell wall formation. Adds enolpyruvyl to UDP-N-acetylglucosamine. The protein is UDP-N-acetylglucosamine 1-carboxyvinyltransferase of Prochlorococcus marinus (strain MIT 9312).